The primary structure comprises 2273 residues: Retinal-specific phospholipid-transporting ATPase ABCA4 (2273 aa).

At 1–21 the chain is on the cytoplasmic side; the sequence is MGFVRQIQLLLWKNWTLRKRQ. A helical transmembrane segment spans residues 22–42; sequence KIRFVVELVWPLSLFLVLIWL. The Extracellular portion of the chain corresponds to 43–646; sequence RNANPLYSHH…MPYPCFVDDS (604 aa). Cystine bridges form between Cys54–Cys81 and Cys75–Cys324. N-linked (GlcNAc...) asparagine glycosylation is present at Asn98. 2 residues coordinate Mg(2+): Ser336 and Asn338. Cys370 and Cys519 form a disulfide bridge. Asn415, Asn444, and Asn504 each carry an N-linked (GlcNAc...) asparagine glycan. The an N-all-trans-retinylidenephosphatidylethanolamine site is built by Arg587 and Arg653. Intrachain disulfides connect Cys641/Cys1490, Cys1444/Cys1455, and Cys1488/Cys1502. A helical transmembrane segment spans residues 647–667; that stretch reads FMIILNRCFPIFMVLAWIYSV. At 668 to 699 the chain is on the cytoplasmic side; that stretch reads SMTVKSIVLEKELRLKETLKNQGVSNAVIWCT. Residues 700–720 traverse the membrane as a helical segment; that stretch reads WFLDSFSIMSMSIFLLTIFIM. Residues 721–730 are Extracellular-facing; it reads HGRILHYSDP. A helical membrane pass occupies residues 731–751; it reads FILFLFLLAFSTATIMLCFLL. The Cytoplasmic segment spans residues 752 to 759; the sequence is STFFSKAS. A helical transmembrane segment spans residues 760–780; it reads LAAACSGVIYFTLYLPHILCF. The Extracellular portion of the chain corresponds to 781–835; it reads AWQDRMTAELKKAVSLLSPVAFGFGTEYLVRFEEQGLGLQWSNIGNSPTEGDEFS. A helical membrane pass occupies residues 836–856; the sequence is FLLSMQMMLLDAAVYGLLAWY. Residues 857 to 1376 lie on the Cytoplasmic side of the membrane; it reads LDQVFPGDYG…IRSHKDFLAQ (520 aa). Residues 891 to 911 are disordered; sequence ERALEKTEPLTEETEDPEHPE. Phosphothreonine is present on Thr901. An ABC transporter 1 domain is found at 929-1160; that stretch reads VCVKNLVKIF…FGTGLYLTLV (232 aa). ATP is bound by residues Phe938, Gly966, and Lys969. Thr970 contributes to the Mg(2+) binding site. ATP contacts are provided by Thr971, Gln1010, Lys1054, Gly1064, Gly1065, and His1118. A Phosphoserine modification is found at Ser1185. The segment at 1284–1345 is disordered; sequence PLFAGGAQQK…EPECPGPQLN (62 aa). Thr1313 is subject to Phosphothreonine. Residue Ser1317 is modified to Phosphoserine. Residues 1331-1340 show a composition bias toward pro residues; that stretch reads GQPPPEPECP. Residues 1377–1397 form a helical membrane-spanning segment; that stretch reads IVLPATFVFLALMLSIVIPPF. The Extracellular segment spans residues 1398–1727; that stretch reads GEYPALTLHP…VSPTTYWVTN (330 aa). Residue Asn1469 is glycosylated (N-linked (GlcNAc...) asparagine). Asn1529, Asn1588, and Asn1662 each carry an N-linked (GlcNAc...) asparagine glycan. The chain crosses the membrane as a helical span at residues 1728–1748; the sequence is FLWDIMNYSVSAGLVVGIFIG. Residues 1749–1759 are Cytoplasmic-facing; the sequence is FQKKAYTSPEN. The chain crosses the membrane as a helical span at residues 1760 to 1780; it reads LPALVALLLLYGWAVIPMMYP. Over 1781 to 1792 the chain is Extracellular; the sequence is ASFLFDVPSTAY. The helical transmembrane segment at 1793–1813 threads the bilayer; it reads VALSCANLFIGINSSAITFIL. Topologically, residues 1814–1831 are cytoplasmic; the sequence is ELFENNRTLLRFNAVLRK. A helical membrane pass occupies residues 1832–1852; sequence LLIVFPHFCLGRGLIDLALSQ. At 1853–1873 the chain is on the extracellular side; sequence AVTDVYARFGEEHSANPFHWD. The helical transmembrane segment at 1874-1894 threads the bilayer; the sequence is LIGKNLFAMVVEGVVYFLLTL. The Cytoplasmic segment spans residues 1895–2273; the sequence is LVQRHFFLSQ…AAGASRQAQD (379 aa). The region spanning 1938 to 2170 is the ABC transporter 2 domain; it reads LRLHELTKIY…FGDGYIVTMK (233 aa). ATP contacts are provided by Asn1974, Gly1975, Lys1978, Thr1979, Thr1980, and Gly2073. Thr1979 contacts Mg(2+). Positions 2244–2249 are essential for ATP binding and ATPase activity; it reads VFVNFA.

This sequence belongs to the ABC transporter superfamily. ABCA family. In terms of processing, proteolytic cleavage by trypsin leads to a 120-kDa N-terminal fragment and a 115-kDa C-terminal fragment that are linked through disulfide bonds. N-glycosylated. Post-translationally, phosphorylation is independent of light exposure and modulates ATPase activity. Retinal-specific. Seems to be exclusively found in the rims of rod photoreceptor cells.

Its subcellular location is the membrane. The protein resides in the endoplasmic reticulum. The protein localises to the cytoplasmic vesicle. It localises to the cell projection. It is found in the cilium. Its subcellular location is the photoreceptor outer segment. It catalyses the reaction an N-all-trans-retinylidenephosphatidylethanolamine(out) + ATP + H2O = an N-all-trans-retinylidenephosphatidylethanolamine(in) + ADP + phosphate + H(+). The enzyme catalyses ATP + H2O + phospholipidSide 1 = ADP + phosphate + phospholipidSide 2.. It carries out the reaction a 1,2-diacyl-sn-glycero-3-phosphoethanolamine(out) + ATP + H2O = a 1,2-diacyl-sn-glycero-3-phosphoethanolamine(in) + ADP + phosphate + H(+). The catalysed reaction is N-11-cis-retinylidenephosphatidylethanolamine(out) + ATP + H2O = N-11-cis-retinylidenephosphatidylethanolamine(in) + ADP + phosphate + H(+). It catalyses the reaction ATP + H2O = ADP + phosphate + H(+). ATPase activity is decreased by cholesterol and ceramide. Phospholipids translocase activity is highly reduced by berylium fluoride and aluminum floride. N-ethylmaleimide inhibits phospholipid translocase activity. Flippase that catalyzes in an ATP-dependent manner the transport of retinal-phosphatidylethanolamine conjugates like 11-cis and all-trans isomers of N-retinylidene-phosphatidylethanolamine (N-Ret-PE) from the lumen to the cytoplasmic leaflet of photoreceptor outer segment disk membranes, where 11-cis-retinylidene-phosphatidylethanolamine is then isomerized to its all-trans isomer and reduced by RDH8 to produce all-trans-retinol. This transport activity ensures that all-trans-retinal generated from photoexcitation and 11-cis-retinal not needed for the regeneration of rhodopsin and cone opsins are effectively cleared from the photoreceptors, therefore preventing their accumulation and the formation of toxic bisretinoid. Displays ATPase activity in vitro in absence of retinal substrate. May display GTPase activity that is strongly influenced by the lipid environment and the presence of retinoid compounds. Binds the unprotonated form of N-retinylidene-phosphatidylethanolamine with high affinity in the absence of ATP, and ATP binding and hydrolysis induce a protein conformational change that causes N-retinylidene-phosphatidylethanolamine release. The sequence is that of Retinal-specific phospholipid-transporting ATPase ABCA4 from Homo sapiens (Human).